We begin with the raw amino-acid sequence, 727 residues long: ATP-dependent zinc metalloprotease FtsH (727 aa).

The Cytoplasmic segment spans residues 1–6 (MQKAFR). Residues 7–27 (NVLVIAIIGVIIFGVFSYING) form a helical membrane-spanning segment. Residues 28–110 (NGNTPKQLSY…KVKEEEKQSV (83 aa)) are Extracellular-facing. A helical transmembrane segment spans residues 111–131 (FVSMLTTLIPVLIIAFLFIFF). Residues 132–727 (LSQAQGGGGG…PNDPNNPSNR (596 aa)) lie on the Cytoplasmic side of the membrane. 205–212 (GPPGTGKT) lines the ATP pocket. His-427 contacts Zn(2+). Glu-428 is an active-site residue. Zn(2+) is bound by residues His-431 and Asp-503. Basic and acidic residues-rich tracts occupy residues 645–684 (LEEGKEDMREDRKEDNDMNRERRHRQRDDRDNQTGHDQLR) and 691–706 (NDQHRGHSNNEEDTGH). Residues 645–727 (LEEGKEDMRE…PNDPNNPSNR (83 aa)) are disordered. A compositionally biased stretch (low complexity) spans 710–727 (PNIDKPYNPNDPNNPSNR).

In the central section; belongs to the AAA ATPase family. The protein in the C-terminal section; belongs to the peptidase M41 family. As to quaternary structure, homohexamer. Requires Zn(2+) as cofactor.

The protein resides in the cell membrane. Its function is as follows. Acts as a processive, ATP-dependent zinc metallopeptidase for both cytoplasmic and membrane proteins. Plays a role in the quality control of integral membrane proteins. This Staphylococcus haemolyticus (strain JCSC1435) protein is ATP-dependent zinc metalloprotease FtsH.